The sequence spans 158 residues: Osmosensory protein A (158 aa).

Thr2 carries the post-translational modification Phosphothreonine; by PknD. The region spanning 28-139 is the STAS domain; that stretch reads AQIRAYLHHL…RSVHKALHDL (112 aa).

The protein belongs to the anti-sigma-factor antagonist family. In terms of assembly, interacts with Rv2638. Phosphorylation abolishes binding to Rv2638. In terms of processing, phosphorylated on Thr-2 by the serine/threonine-protein kinase PknD. Also phosphorylated to a lesser extent by PknB and PknE. Dephosphorylated by PstP.

Its activity is regulated as follows. Regulated by PknD under osmotic stress. Functionally, part of a signaling pathway that enables adaptation to osmotic stress through cell wall remodeling and virulence factor production. Unphosphorylated OprA forms a complex with the anti-anti-sigma-factor paralog Rv2638 that dissociates on OprA phosphorylation by PknD. Phosphorylation of OprA may stimulate the release of SigF from an inhibitory complex and enable the transcription of osmotically regulated genes, such as oprA and the ESX-1-associated virulence factor espA. The chain is Osmosensory protein A from Mycobacterium tuberculosis (strain ATCC 25618 / H37Rv).